Consider the following 59-residue polypeptide: Large ribosomal subunit protein uL30 (59 aa).

It belongs to the universal ribosomal protein uL30 family. Part of the 50S ribosomal subunit.

This chain is Large ribosomal subunit protein uL30, found in Solidesulfovibrio magneticus (strain ATCC 700980 / DSM 13731 / RS-1) (Desulfovibrio magneticus).